The primary structure comprises 147 residues: Peptidyl-lysine N-acetyltransferase YjaB (147 aa).

The region spanning I3–Y144 is the N-acetyltransferase domain.

It belongs to the acetyltransferase family.

The catalysed reaction is L-lysyl-[protein] + acetyl-CoA = N(6)-acetyl-L-lysyl-[protein] + CoA + H(+). Functionally, N-epsilon-lysine acetyltransferase that catalyzes acetylation of a large number of proteins. Binds acetyl-CoA. The protein is Peptidyl-lysine N-acetyltransferase YjaB (yjaB) of Escherichia coli (strain K12).